Here is a 342-residue protein sequence, read N- to C-terminus: Holliday junction branch migration complex subunit RuvB (342 aa).

The tract at residues 1-179 is large ATPase domain (RuvB-L); the sequence is MTNILSPEKS…FGIPMRLNFY (179 aa). ATP-binding positions include Ile-18, Arg-19, Gly-60, Lys-63, Thr-64, Thr-65, 126 to 128, Arg-169, Tyr-179, and Arg-216; that span reads EDF. Thr-64 provides a ligand contact to Mg(2+). Residues 180 to 250 are small ATPAse domain (RuvB-S); sequence NTEELKKVLN…VSDFGLNRLE (71 aa). The segment at 253–342 is head domain (RuvB-H); that stretch reads RIGLDSNDYR…HQFNIFNENE (90 aa). Arg-289, Arg-308, and Arg-313 together coordinate DNA.

The protein belongs to the RuvB family. Homohexamer. Forms an RuvA(8)-RuvB(12)-Holliday junction (HJ) complex. HJ DNA is sandwiched between 2 RuvA tetramers; dsDNA enters through RuvA and exits via RuvB. An RuvB hexamer assembles on each DNA strand where it exits the tetramer. Each RuvB hexamer is contacted by two RuvA subunits (via domain III) on 2 adjacent RuvB subunits; this complex drives branch migration. In the full resolvosome a probable DNA-RuvA(4)-RuvB(12)-RuvC(2) complex forms which resolves the HJ.

It is found in the cytoplasm. The enzyme catalyses ATP + H2O = ADP + phosphate + H(+). In terms of biological role, the RuvA-RuvB-RuvC complex processes Holliday junction (HJ) DNA during genetic recombination and DNA repair, while the RuvA-RuvB complex plays an important role in the rescue of blocked DNA replication forks via replication fork reversal (RFR). RuvA specifically binds to HJ cruciform DNA, conferring on it an open structure. The RuvB hexamer acts as an ATP-dependent pump, pulling dsDNA into and through the RuvAB complex. RuvB forms 2 homohexamers on either side of HJ DNA bound by 1 or 2 RuvA tetramers; 4 subunits per hexamer contact DNA at a time. Coordinated motions by a converter formed by DNA-disengaged RuvB subunits stimulates ATP hydrolysis and nucleotide exchange. Immobilization of the converter enables RuvB to convert the ATP-contained energy into a lever motion, pulling 2 nucleotides of DNA out of the RuvA tetramer per ATP hydrolyzed, thus driving DNA branch migration. The RuvB motors rotate together with the DNA substrate, which together with the progressing nucleotide cycle form the mechanistic basis for DNA recombination by continuous HJ branch migration. Branch migration allows RuvC to scan DNA until it finds its consensus sequence, where it cleaves and resolves cruciform DNA. In Rickettsia rickettsii (strain Sheila Smith), this protein is Holliday junction branch migration complex subunit RuvB.